The sequence spans 235 residues: 7-cyano-7-deazaguanine synthase (235 aa).

ATP is bound at residue phenylalanine 9–leucine 19. Zn(2+)-binding residues include cysteine 197, cysteine 212, cysteine 215, and cysteine 218.

Belongs to the QueC family. It depends on Zn(2+) as a cofactor.

The catalysed reaction is 7-carboxy-7-deazaguanine + NH4(+) + ATP = 7-cyano-7-deazaguanine + ADP + phosphate + H2O + H(+). The protein operates within purine metabolism; 7-cyano-7-deazaguanine biosynthesis. Functionally, catalyzes the ATP-dependent conversion of 7-carboxy-7-deazaguanine (CDG) to 7-cyano-7-deazaguanine (preQ(0)). The polypeptide is 7-cyano-7-deazaguanine synthase (Polaromonas sp. (strain JS666 / ATCC BAA-500)).